A 248-amino-acid polypeptide reads, in one-letter code: 3-deoxy-manno-octulosonate cytidylyltransferase (248 aa).

It belongs to the KdsB family.

The protein localises to the cytoplasm. The catalysed reaction is 3-deoxy-alpha-D-manno-oct-2-ulosonate + CTP = CMP-3-deoxy-beta-D-manno-octulosonate + diphosphate. The protein operates within nucleotide-sugar biosynthesis; CMP-3-deoxy-D-manno-octulosonate biosynthesis; CMP-3-deoxy-D-manno-octulosonate from 3-deoxy-D-manno-octulosonate and CTP: step 1/1. Its pathway is bacterial outer membrane biogenesis; lipopolysaccharide biosynthesis. Activates KDO (a required 8-carbon sugar) for incorporation into bacterial lipopolysaccharide in Gram-negative bacteria. In Alteromonas mediterranea (strain DSM 17117 / CIP 110805 / LMG 28347 / Deep ecotype), this protein is 3-deoxy-manno-octulosonate cytidylyltransferase.